The following is a 748-amino-acid chain: Acyl-coenzyme A oxidase (748 aa).

Belongs to the acyl-CoA oxidase family. FAD serves as cofactor.

It localises to the peroxisome. It catalyses the reaction a 2,3-saturated acyl-CoA + O2 = a (2E)-enoyl-CoA + H2O2. Its pathway is lipid metabolism; peroxisomal fatty acid beta-oxidation. This is Acyl-coenzyme A oxidase (POX1) from Candida glabrata (strain ATCC 2001 / BCRC 20586 / JCM 3761 / NBRC 0622 / NRRL Y-65 / CBS 138) (Yeast).